The chain runs to 122 residues: uncharacterized protein (122 aa).

This is an uncharacterized protein from Bacillus subtilis (strain 168).